Consider the following 232-residue polypeptide: Pyridoxine 5'-phosphate synthase (232 aa).

N7 is a binding site for 3-amino-2-oxopropyl phosphate. 9–10 (DH) is a binding site for 1-deoxy-D-xylulose 5-phosphate. Residue R18 coordinates 3-amino-2-oxopropyl phosphate. H43 (proton acceptor) is an active-site residue. Positions 45 and 50 each coordinate 1-deoxy-D-xylulose 5-phosphate. The active-site Proton acceptor is the E69. Position 99 (T99) interacts with 1-deoxy-D-xylulose 5-phosphate. H185 (proton donor) is an active-site residue. 3-amino-2-oxopropyl phosphate is bound by residues G186 and 207 to 208 (GH).

Belongs to the PNP synthase family. Homooctamer; tetramer of dimers.

It is found in the cytoplasm. The catalysed reaction is 3-amino-2-oxopropyl phosphate + 1-deoxy-D-xylulose 5-phosphate = pyridoxine 5'-phosphate + phosphate + 2 H2O + H(+). The protein operates within cofactor biosynthesis; pyridoxine 5'-phosphate biosynthesis; pyridoxine 5'-phosphate from D-erythrose 4-phosphate: step 5/5. In terms of biological role, catalyzes the complicated ring closure reaction between the two acyclic compounds 1-deoxy-D-xylulose-5-phosphate (DXP) and 3-amino-2-oxopropyl phosphate (1-amino-acetone-3-phosphate or AAP) to form pyridoxine 5'-phosphate (PNP) and inorganic phosphate. The sequence is that of Pyridoxine 5'-phosphate synthase from Gluconobacter oxydans (strain 621H) (Gluconobacter suboxydans).